The sequence spans 377 residues: Mitogen-activated protein kinase pmk-1 (377 aa).

The Protein kinase domain maps to 35–319 (YINLTPIGTG…AKEAMEHEYL (285 aa)). ATP is bound by residues 41 to 49 (IGTGAYGTV) and lysine 64. Catalysis depends on aspartate 179, which acts as the Proton acceptor. Position 191 is a phosphothreonine (threonine 191). The short motif at 191-193 (TGY) is the TXY element. At tyrosine 193 the chain carries Phosphotyrosine.

Belongs to the protein kinase superfamily. CMGC Ser/Thr protein kinase family. MAP kinase subfamily. As to quaternary structure, interacts with transcription factor atf-7; perhaps in a manner dependent on dual specificity protein kinase sek-1. Mg(2+) is required as a cofactor. Requires Mn(2+) as cofactor. In terms of processing, dually phosphorylated on Thr-191 and Tyr-193, probably by sek-1, which activates the enzyme. Increased phosphorylation in response to the heavy metal arsenite. Increased phosphorylation in response to intestinal colonization by probiotic Lactobacillus fermentum strain JDFM216. In terms of tissue distribution, expressed in intestinal cells.

The protein localises to the nucleus. The catalysed reaction is L-seryl-[protein] + ATP = O-phospho-L-seryl-[protein] + ADP + H(+). It carries out the reaction L-threonyl-[protein] + ATP = O-phospho-L-threonyl-[protein] + ADP + H(+). Activated by phosphorylation on threonine and tyrosine. Inhibited by pyridinyl-imidazole related compounds. In terms of biological role, serine/threonine kinase which responds to activation by environmental stress and pro-inflammatory cytokines by phosphorylating downstream targets. As part of a MAP kinase signaling pathway, plays a role in modulation of lifespan and immunity. Phosphorylates skn-1 which probably regulates skn-1 nuclear translocation in response to oxidative stress. Probably by activating skn-1, involved in the up-regulation of gcs-1 and glutathione-S-transferase gst-4 expression upon bacteria infection. Up-regulates expression of gcs-1 in intestinal cells upon arsenite treatment. Functions downstream of the MAPKK sek-1 and the MAPKKK nsy-1 as the MAP kinase which regulates pathogen resistance and responses to oxidative stress. Required for expression of antimicrobial peptide nlp-29 in response to fungal infection or physical injury. Involved in resistance to the nematotoxic C.cinerea galectin (Cgl2). May play a redundant role with other MAP kinases in susceptibility to anoxia, downstream of tir-1/nsy-1. Phosphorylates transcription factor rnt-1 during oxidative stress which results in rnt-1 stabilization in the intestine. Phosphorylates transcription factor atf-7 during pathogen infection resulting in modulation of target genes. Probably downstream of nsy-1 and sek-1, involved in germline apoptosis induced by heavy metals, such as Cu(2+). Regulates the basal expression of immune effector genes including irg-4, irg-5, mul-1 and drd-50. This chain is Mitogen-activated protein kinase pmk-1, found in Caenorhabditis elegans.